Here is a 199-residue protein sequence, read N- to C-terminus: UPF0637 protein LVIS_1261 (199 aa).

The protein belongs to the UPF0637 family.

The chain is UPF0637 protein LVIS_1261 from Levilactobacillus brevis (strain ATCC 367 / BCRC 12310 / CIP 105137 / JCM 1170 / LMG 11437 / NCIMB 947 / NCTC 947) (Lactobacillus brevis).